Here is a 376-residue protein sequence, read N- to C-terminus: 26S proteasome non-ATPase regulatory subunit 13 (376 aa).

The PCI domain occupies 171 to 338 (SYYKDALRFL…KRVHMTWVQP (168 aa)). Lysine 298 is modified (N6-acetyllysine).

This sequence belongs to the proteasome subunit S11 family. In terms of assembly, component of the 19S proteasome regulatory particle complex. The 26S proteasome consists of a 20S core particle (CP) and two 19S regulatory subunits (RP). The regulatory particle is made of a lid composed of 9 subunits including PSMD13, a base containing 6 ATPases and few additional components.

Component of the 26S proteasome, a multiprotein complex involved in the ATP-dependent degradation of ubiquitinated proteins. This complex plays a key role in the maintenance of protein homeostasis by removing misfolded or damaged proteins, which could impair cellular functions, and by removing proteins whose functions are no longer required. Therefore, the proteasome participates in numerous cellular processes, including cell cycle progression, apoptosis, or DNA damage repair. This chain is 26S proteasome non-ATPase regulatory subunit 13 (Psmd13), found in Mus musculus (Mouse).